The chain runs to 364 residues: Formate dehydrogenase (364 aa).

Residues valine 93 and asparagine 119 each coordinate substrate. NAD(+) is bound by residues 174–175 (RI), aspartate 195, 230–234 (PLHAG), threonine 256, aspartate 282, and 311–314 (HYSG).

It belongs to the D-isomer specific 2-hydroxyacid dehydrogenase family. FDH subfamily. In terms of assembly, homodimer.

It localises to the cytoplasm. It carries out the reaction formate + NAD(+) = CO2 + NADH. With respect to regulation, cu(2+), Hg and p-chloromercuribenzoate are strong inhibitors of enzyme activity and Ca(2+), Mg(2+), Zn(2+), Mn(2+), Cd(2+) and Sn(2+) have no effect on activity indicating a cysteine residue in the protein is essential for enzyme activity or to maintain the proper structure of the enzyme. Nitrite and nitrate inhibit some enzyme activity, however cyanide, azide, thiocyanate and cyanate are strong inhibitors of the enzymatic reaction. The inhibition of cyanide is competitive with formate and reversible. Its function is as follows. Catalyzes the NAD(+)-dependent oxidation of formate to carbon dioxide. Formate oxidation is the final step in the methanol oxidation pathway in methylotrophic microorganisms. Has a role in the detoxification of exogenous formate in non-methylotrophic organisms. The polypeptide is Formate dehydrogenase (Candida boidinii (Yeast)).